A 600-amino-acid chain; its full sequence is Sulfite reductase [NADPH] flavoprotein alpha-component (600 aa).

Positions 63–201 constitute a Flavodoxin-like domain; that stretch reads ITLISASQTG…AAQAWRQRVV (139 aa). Residues 69 to 74, 116 to 119, and 152 to 161 contribute to the FMN site; these read SQTGNA, STQG, and LGDTSYEHFC. In terms of domain architecture, FAD-binding FR-type spans 235–449; it reads ESPLTATLSV…IEHNDNFRLP (215 aa). FAD-binding positions include Thr-323, Ala-357, 387–390, 405–407, and 420–423; these read RLYS, TVG, and GGAS. NADP(+) is bound by residues 520-521, 526-530, and Asp-562; these read SR and KIYVQ. Tyr-600 lines the FAD pocket.

This sequence belongs to the NADPH-dependent sulphite reductase flavoprotein subunit CysJ family. The protein in the N-terminal section; belongs to the flavodoxin family. It in the C-terminal section; belongs to the flavoprotein pyridine nucleotide cytochrome reductase family. Alpha(8)-beta(8). The alpha component is a flavoprotein, the beta component is a hemoprotein. It depends on FAD as a cofactor. The cofactor is FMN.

It carries out the reaction hydrogen sulfide + 3 NADP(+) + 3 H2O = sulfite + 3 NADPH + 4 H(+). Its pathway is sulfur metabolism; hydrogen sulfide biosynthesis; hydrogen sulfide from sulfite (NADPH route): step 1/1. Component of the sulfite reductase complex that catalyzes the 6-electron reduction of sulfite to sulfide. This is one of several activities required for the biosynthesis of L-cysteine from sulfate. The flavoprotein component catalyzes the electron flow from NADPH -&gt; FAD -&gt; FMN to the hemoprotein component. The chain is Sulfite reductase [NADPH] flavoprotein alpha-component from Cronobacter sakazakii (strain ATCC BAA-894) (Enterobacter sakazakii).